We begin with the raw amino-acid sequence, 461 residues long: Glutamate--tRNA ligase (461 aa).

The 'HIGH' region signature appears at 8–18 (PSPTGYLHIGG). Residues 240 to 244 (KMSKR) carry the 'KMSKS' region motif. An ATP-binding site is contributed by K243.

The protein belongs to the class-I aminoacyl-tRNA synthetase family. Glutamate--tRNA ligase type 1 subfamily. In terms of assembly, monomer.

The protein resides in the cytoplasm. It catalyses the reaction tRNA(Glu) + L-glutamate + ATP = L-glutamyl-tRNA(Glu) + AMP + diphosphate. Functionally, catalyzes the attachment of glutamate to tRNA(Glu) in a two-step reaction: glutamate is first activated by ATP to form Glu-AMP and then transferred to the acceptor end of tRNA(Glu). In Chromobacterium violaceum (strain ATCC 12472 / DSM 30191 / JCM 1249 / CCUG 213 / NBRC 12614 / NCIMB 9131 / NCTC 9757 / MK), this protein is Glutamate--tRNA ligase.